We begin with the raw amino-acid sequence, 228 residues long: Putative L-ribulose-5-phosphate 4-epimerase UlaF (228 aa).

Substrate contacts are provided by residues 26 to 27 (GN), 43 to 44 (SG), and 72 to 73 (SS). Residues Asp74, His93, and His95 each coordinate Zn(2+). Asp118 functions as the Proton donor/acceptor in the catalytic mechanism. His167 provides a ligand contact to Zn(2+). Tyr225 acts as the Proton donor/acceptor in catalysis.

Belongs to the aldolase class II family. AraD/FucA subfamily. It depends on Zn(2+) as a cofactor.

The catalysed reaction is L-ribulose 5-phosphate = D-xylulose 5-phosphate. It participates in cofactor degradation; L-ascorbate degradation; D-xylulose 5-phosphate from L-ascorbate: step 4/4. Catalyzes the isomerization of L-ribulose 5-phosphate to D-xylulose 5-phosphate. Is involved in the anaerobic L-ascorbate utilization. The protein is Putative L-ribulose-5-phosphate 4-epimerase UlaF of Shigella boydii serotype 4 (strain Sb227).